Consider the following 367-residue polypeptide: Lysophosphatidic acid receptor 5 (367 aa).

Topologically, residues 1-25 are extracellular; it reads MQANSSAKSLPTECPDYQPIHHLHL. Asparagine 4 is a glycosylation site (N-linked (GlcNAc...) asparagine). A helical membrane pass occupies residues 26-46; it reads VVYSVVLAAGLPLNALALWVF. Residues 47 to 54 lie on the Cytoplasmic side of the membrane; it reads LRALRVHS. A helical membrane pass occupies residues 55-75; sequence VVSVYMCNLAASDLLFTLSLP. Topologically, residues 76–95 are extracellular; it reads LRLSYYARHYWPFPDFLCQL. Cysteine 93 and cysteine 174 form a disulfide bridge. A helical transmembrane segment spans residues 96–116; it reads AGAVFQMNMYGSCIFLTLINV. The Cytoplasmic portion of the chain corresponds to 117 to 135; the sequence is DRYAAIVHPLRLRHLRRPR. The chain crosses the membrane as a helical span at residues 136–156; it reads VARLLCLGVWALILVFAVPTI. Residues 157 to 186 lie on the Extracellular side of the membrane; the sequence is LAHQPSSCARDGRNVSLCFESFSDKLWKGS. A glycan (N-linked (GlcNAc...) asparagine) is linked at asparagine 170. A helical membrane pass occupies residues 187 to 207; sequence LLPLLLLAEALGFLLPLAAVV. The Cytoplasmic segment spans residues 208–238; that stretch reads YSSGRVFWTLARPDATRSQRRRKTVRLLLAS. Residues 239-259 traverse the membrane as a helical segment; that stretch reads LVIFLLCFVPYNATLAVYGLL. The Extracellular portion of the chain corresponds to 260–275; sequence RGEVVPASSEARKKVR. Residues 276–296 form a helical membrane-spanning segment; that stretch reads GVLMVMVLLAGANCVLDPLVY. Residues 297-367 lie on the Cytoplasmic side of the membrane; sequence YFSAEGFRNT…FTPSHEDSSF (71 aa). The span at 332 to 350 shows a compositional bias: low complexity; it reads LTETAHASTLTTTSQGQLQ. Positions 332–367 are disordered; the sequence is LTETAHASTLTTTSQGQLQPSDPRSSFTPSHEDSSF. Polar residues predominate over residues 351–360; sequence PSDPRSSFTP.

This sequence belongs to the G-protein coupled receptor 1 family.

It is found in the cell membrane. Receptor for lysophosphatidic acid (LPA), a mediator of diverse cellular activities. The polypeptide is Lysophosphatidic acid receptor 5 (LPAR5) (Bos taurus (Bovine)).